A 1124-amino-acid chain; its full sequence is Putative DNA mismatch repair protein mutS homolog L359 (1124 aa).

779 to 786 (SNNWAGKS) contributes to the ATP binding site.

It belongs to the DNA mismatch repair MutS family.

Functionally, may be involved in DNA-mismatch repair. The polypeptide is Putative DNA mismatch repair protein mutS homolog L359 (Acanthamoeba polyphaga (Amoeba)).